Here is a 699-residue protein sequence, read N- to C-terminus: Elongation factor G (699 aa).

In terms of domain architecture, tr-type G spans 8-287 (EKLRNIGIVA…AVIDYLPSPI (280 aa)). GTP-binding positions include 17–24 (AHIDAGKT), 85–89 (DTPGH), and 139–142 (NKMD).

Belongs to the TRAFAC class translation factor GTPase superfamily. Classic translation factor GTPase family. EF-G/EF-2 subfamily.

It is found in the cytoplasm. Functionally, catalyzes the GTP-dependent ribosomal translocation step during translation elongation. During this step, the ribosome changes from the pre-translocational (PRE) to the post-translocational (POST) state as the newly formed A-site-bound peptidyl-tRNA and P-site-bound deacylated tRNA move to the P and E sites, respectively. Catalyzes the coordinated movement of the two tRNA molecules, the mRNA and conformational changes in the ribosome. The protein is Elongation factor G (fusA) of Aquifex aeolicus (strain VF5).